Consider the following 555-residue polypeptide: Potassium-transporting ATPase potassium-binding subunit (555 aa).

10 helical membrane passes run 2 to 22 (IWVAVVITMLLFILVAKPTGI), 60 to 80 (QYALSLVLLNGFMIVVVYFIF), 130 to 150 (IGITFLMFAAPATTLALVMAF), 173 to 193 (VFLPIAFMAALVFVALGVPQT), 246 to 266 (MSNILQMMLMMLLPTALPFTY), 278 to 298 (ILFVSLFMVFLLGFITITTSE), 374 to 394 (AGFVNIIMYAIIAVFISGLMV), 412 to 432 (LIAVTILFHPLLILGFSALAL), 483 to 503 (LVMFLGRYFSLITMLAVAASL), and 525 to 545 (GIFIGTIVIVGALTFFPMLVL).

The protein belongs to the KdpA family. The system is composed of three essential subunits: KdpA, KdpB and KdpC.

The protein resides in the cell membrane. Functionally, part of the high-affinity ATP-driven potassium transport (or Kdp) system, which catalyzes the hydrolysis of ATP coupled with the electrogenic transport of potassium into the cytoplasm. This subunit binds the extracellular potassium ions and delivers the ions to the membrane domain of KdpB through an intramembrane tunnel. This is Potassium-transporting ATPase potassium-binding subunit from Bacillus cereus (strain Q1).